Reading from the N-terminus, the 138-residue chain is rRNA methyltransferase 1, mitochondrial (138 aa).

A mitochondrion-targeting transit peptide spans 1 to 21 (MNNQPCSIVWRRFLTSKVKPA). The disordered stretch occupies residues 92–113 (KQDILSSKRQQEEHKSKYSRKS).

The protein belongs to the class IV-like SAM-binding methyltransferase superfamily. RNA methyltransferase TrmH family.

It localises to the mitochondrion. It catalyses the reaction a guanosine in 21S rRNA + S-adenosyl-L-methionine = a 2'-O-methylguanosine in 21S rRNA + S-adenosyl-L-homocysteine + H(+). S-adenosyl-L-methionine-dependent 2'-O-ribose methyltransferase that catalyzes the formation of the 2'-O-methylguanosine corresponding to position 2270 in S.cerevisiae 21S mitochondrial large ribosomal RNA, a universally conserved modification in the peptidyl transferase domain of the 21S rRNA. This is rRNA methyltransferase 1, mitochondrial from Lachancea kluyveri (strain ATCC 58438 / CBS 3082 / BCRC 21498 / NBRC 1685 / JCM 7257 / NCYC 543 / NRRL Y-12651) (Yeast).